The sequence spans 109 residues: Histidine-rich carboxyl terminus protein 1 (109 aa).

A helical transmembrane segment spans residues 13–33 (WITGTALAFLMLLWLMALCLF). The tract at residues 77 to 109 (TSVGVHHHHHHSPHRLHHHKHHHRHHHAHGARR) is disordered. Residues 81–109 (VHHHHHHSPHRLHHHKHHHRHHHAHGARR) are compositionally biased toward basic residues.

It localises to the membrane. This is Histidine-rich carboxyl terminus protein 1 (Hrct1) from Mus musculus (Mouse).